Reading from the N-terminus, the 119-residue chain is MIKLKKGDPVIVLTGKDKGKVSKIKQIIRKDGKVKVVVEGVNVVKKHLRPIQGVREGGIVEIEKPIDISNVAYYDEKSKRPVKVGIKYVVEGNKISKVRINKKSGEIIDKVWEKIKKEV.

It belongs to the universal ribosomal protein uL24 family. As to quaternary structure, part of the 50S ribosomal subunit.

Its function is as follows. One of two assembly initiator proteins, it binds directly to the 5'-end of the 23S rRNA, where it nucleates assembly of the 50S subunit. Functionally, one of the proteins that surrounds the polypeptide exit tunnel on the outside of the subunit. This chain is Large ribosomal subunit protein uL24, found in Sulfurihydrogenibium sp. (strain YO3AOP1).